Reading from the N-terminus, the 276-residue chain is Short-chain dehydrogenase/reductase ATR10 (276 aa).

Residues I29, S51, D78, and N105 each coordinate NADP(+). Catalysis depends on S161, which acts as the Proton donor. Residues K185 and T214 each contribute to the NADP(+) site. K185 functions as the Lowers pKa of active site Tyr in the catalytic mechanism.

The protein belongs to the short-chain dehydrogenases/reductases (SDR) family.

It functions in the pathway mycotoxin biosynthesis. Short-chain dehydrogenase/reductase; part of the core atranone cluster (CAC) which products are predicted to catalyze most or all steps of mycotoxin atranone synthesis, starting from geranylgeranyl pyrophosphate (GGPP). The initial cyclization of GGPP to dolabellane is probably performed by the terpene cyclase ATR13. The Baeyer-Villiger oxidation near the end of the atranone synthesis, which converts atranones D and E to atranones F and G is predicted to be catalyzed by the monooxygenase ATR8. Of the CAC's other predicted gene products, the reducing PKS ATR6 might synthesize a polyketide chain. This polyketide is probably transferred onto the atranone backbone by the polyketide transferase ATR5. Other predicted CAC products include 4 oxygenases (ATR2, ATR3, ATR4, and ATR14), 3 short-chain reductases (ATR7, ATR9, and ATR10), and a methyltransferase (ATR12). These may all be involved in the various steps of atranone biosynthesis, although their specific roles must await experimental determination. In Stachybotrys chlorohalonatus (strain IBT 40285), this protein is Short-chain dehydrogenase/reductase ATR10.